Here is a 468-residue protein sequence, read N- to C-terminus: Monogalactosyldiacylglycerol synthase 2, chloroplastic (468 aa).

UDP-binding positions include histidine 82, arginine 251, 361 to 365 (GTIAE), and glutamate 383.

Belongs to the glycosyltransferase 28 family. As to expression, expressed mainly in floral buds. Detected in roots, leaves, stems, siliques and pollen tubes.

Its subcellular location is the plastid. It localises to the chloroplast outer membrane. The enzyme catalyses a 1,2-diacyl-sn-glycerol + UDP-alpha-D-galactose = a 1,2-diacyl-3-O-(beta-D-galactosyl)-sn-glycerol + UDP + H(+). It carries out the reaction 1,2-di-(9Z,12Z-octadecadienoyl)-sn-glycerol + UDP-alpha-D-galactose = 1,2-di-(9Z,12Z-octadecadienoyl)-3-beta-D-galactosyl-sn-glycerol + UDP + H(+). The catalysed reaction is 1-(9Z-octadecenoyl)-2-hexadecanoyl-sn-glycerol + UDP-alpha-D-galactose = 1-(9Z-octadecenoyl)-2-hexadecanoyl-3-beta-D-galactosyl-sn-glycerol + UDP + H(+). It catalyses the reaction 1,2-di-(9Z-octadecenoyl)-sn-glycerol + UDP-alpha-D-galactose = 1,2-di-(9Z-octadecenoyl)-3-beta-D-galactosyl-sn-glycerol + UDP + H(+). Inhibited by galvestine-1. Functionally, involved in the synthesis of monogalactosyldiacylglycerol, the major structural component of photosynthetic membranes and in the chloroplast envelope biogenesis. Can use both prokaryotic (18:1/16:0) or eukaryotic (18:2/18:2) 1,2-diacylglycerol species, but operates with some preference for the eukaryotic one. Plays a minor role in galactolipid synthesis in chloroplasts. Is required for membrane lipid remodeling in phosphate-starved roots. Acts as the minor factor involved in digalactosyldiacylglycerol (DGDG) biosynthesis in phosphate-starved roots. Does not seem to be required for plant growth under nutrient-sufficient conditions. Required for membrane lipid remodeling in plants grown in acidic conditions. In Arabidopsis thaliana (Mouse-ear cress), this protein is Monogalactosyldiacylglycerol synthase 2, chloroplastic.